The chain runs to 81 residues: Serine rich endogenous peptide 21 (81 aa).

Positions 1-40 are cleaved as a signal peptide; it reads MLELHFEFIDLNQPKMYKFVVCLLTLSFLLLSGLSNTALA. An SCOOP motif motif is present at residues 65–79; the sequence is KVRVLPSASRRGPGQ. A SxS motif essential for MIK2 binding motif is present at residues 71 to 73; sequence SAS.

Belongs to the serine rich endogenous peptide (SCOOP) phytocytokine family. In terms of assembly, interacts with MIK2 (via extracellular leucine-rich repeat domain); this interaction triggers the formation of complex between MIK2 and the BAK1/SERK3 and SERK4 coreceptors, and subsequent BAK1 activation by phosphorylation.

Its subcellular location is the cell membrane. It is found in the secreted. The protein resides in the extracellular space. It localises to the apoplast. Brassicaceae-specific phytocytokine (plant endogenous peptide released into the apoplast) perceived by MIK2 in a BAK1/SERK3 and SERK4 coreceptors-dependent manner, that modulates various physiological and antimicrobial processes including growth prevention and reactive oxygen species (ROS) response regulation. This Arabidopsis thaliana (Mouse-ear cress) protein is Serine rich endogenous peptide 21.